Consider the following 237-residue polypeptide: Ribonuclease PH (237 aa).

Phosphate contacts are provided by residues R86 and 124-126; that span reads GTR.

The protein belongs to the RNase PH family. As to quaternary structure, homohexameric ring arranged as a trimer of dimers.

The enzyme catalyses tRNA(n+1) + phosphate = tRNA(n) + a ribonucleoside 5'-diphosphate. Its function is as follows. Phosphorolytic 3'-5' exoribonuclease that plays an important role in tRNA 3'-end maturation. Removes nucleotide residues following the 3'-CCA terminus of tRNAs; can also add nucleotides to the ends of RNA molecules by using nucleoside diphosphates as substrates, but this may not be physiologically important. Probably plays a role in initiation of 16S rRNA degradation (leading to ribosome degradation) during starvation. The protein is Ribonuclease PH of Cereibacter sphaeroides (strain ATCC 17025 / ATH 2.4.3) (Rhodobacter sphaeroides).